Consider the following 238-residue polypeptide: 1-(5-phosphoribosyl)-5-[(5-phosphoribosylamino)methylideneamino] imidazole-4-carboxamide isomerase (238 aa).

Catalysis depends on aspartate 8, which acts as the Proton acceptor. Catalysis depends on aspartate 130, which acts as the Proton donor.

It belongs to the HisA/HisF family.

It localises to the cytoplasm. It catalyses the reaction 1-(5-phospho-beta-D-ribosyl)-5-[(5-phospho-beta-D-ribosylamino)methylideneamino]imidazole-4-carboxamide = 5-[(5-phospho-1-deoxy-D-ribulos-1-ylimino)methylamino]-1-(5-phospho-beta-D-ribosyl)imidazole-4-carboxamide. It participates in amino-acid biosynthesis; L-histidine biosynthesis; L-histidine from 5-phospho-alpha-D-ribose 1-diphosphate: step 4/9. This Methanococcus maripaludis (strain C6 / ATCC BAA-1332) protein is 1-(5-phosphoribosyl)-5-[(5-phosphoribosylamino)methylideneamino] imidazole-4-carboxamide isomerase.